Consider the following 253-residue polypeptide: LexA repressor (253 aa).

The tract at residues 1–34 is disordered; it reads MAIEKKPAGARGSRGSRTVKTLPNGKPDPASLSD. The segment at residues 56–76 is a DNA-binding region (H-T-H motif); sequence IREIGDAAGLQSTSSVAYQLK. Basic and acidic residues predominate over residues 82–106; the sequence is GFLRRDPNKPRAVDVRHLPETESRS. Residues 82–127 are disordered; it reads GFLRRDPNKPRAVDVRHLPETESRSSKAATQAKSKAPQAGAHDPEL. The span at 107–120 shows a compositional bias: low complexity; sequence SKAATQAKSKAPQA. Residues serine 177 and lysine 214 each act as for autocatalytic cleavage activity in the active site.

It belongs to the peptidase S24 family. Homodimer.

The catalysed reaction is Hydrolysis of Ala-|-Gly bond in repressor LexA.. Represses a number of genes involved in the response to DNA damage (SOS response), including recA and lexA. In the presence of single-stranded DNA, RecA interacts with LexA causing an autocatalytic cleavage which disrupts the DNA-binding part of LexA, leading to derepression of the SOS regulon and eventually DNA repair. The sequence is that of LexA repressor from Corynebacterium glutamicum (strain R).